An 896-amino-acid polypeptide reads, in one-letter code: Echinoderm microtubule-associated protein-like 3 (896 aa).

Position 1 is an N-acetylmethionine (methionine 1). Positions leucine 16–leucine 43 form a coiled coil. A disordered region spans residues proline 50–tyrosine 209. The span at threonine 77 to glutamate 88 shows a compositional bias: polar residues. The segment covering proline 134–proline 145 has biased composition (pro residues). Positions arginine 154–serine 163 are enriched in low complexity. Positions alanine 174–serine 189 are enriched in polar residues. Serine 176, serine 198, and serine 204 each carry phosphoserine. 13 WD repeats span residues arginine 234–proline 286, glycine 295–serine 344, leucine 350–cysteine 392, leucine 398–tryptophan 434, arginine 448–arginine 487, tyrosine 504–proline 543, glutamine 549–aspartate 584, phenylalanine 589–glycine 626, histidine 629–threonine 667, serine 674–valine 709, serine 716–valine 755, arginine 765–tyrosine 823, and alanine 830–valine 869. The interval glycine 876–valine 896 is disordered. Residues proline 877 to valine 896 show a composition bias toward low complexity. Threonine 881 is subject to Phosphothreonine; by CDK1. Serine 883 carries the post-translational modification Phosphoserine.

Belongs to the WD repeat EMAP family. As to quaternary structure, homotrimer; self-association is mediated by the N-terminal coiled coil. Interacts with EML2 but not with EML1. Interacts (phosphorylated at Thr-881) with TUBG1, HAUS1, HAUS2, HAUS3, HAUS4, HAUS5, HAUS6, HAUS7 and HAUS8. In terms of processing, phosphorylation at Thr-881 during mitosis is required for interaction with TUBG1, HAUS1, HAUS2, HAUS3, HAUS4, HAUS5, HAUS6, HAUS7 and HAUS8 and their recruitment to spindle microtubules.

Its subcellular location is the cytoplasm. The protein localises to the cytoskeleton. It localises to the nucleus. The protein resides in the midbody. It is found in the spindle. Functionally, regulates mitotic spindle assembly, microtubule (MT)-kinetochore attachment and chromosome separation via recruitment of HAUS augmin-like complex and TUBG1 to the existing MTs and promoting MT-based MT nucleation. Required for proper alignnment of chromosomes during metaphase. The chain is Echinoderm microtubule-associated protein-like 3 (EML3) from Homo sapiens (Human).